A 469-amino-acid chain; its full sequence is uncharacterized protein (469 aa).

The HTH gntR-type domain occupies 13 to 81 (TPLYEQLYTF…PKIGWFAAEV (69 aa)). The segment at residues 41–60 (KRRLSSLLDVSTATIERAYE) is a DNA-binding region (H-T-H motif). N6-(pyridoxal phosphate)lysine is present on Lys309.

In the C-terminal section; belongs to the class-I pyridoxal-phosphate-dependent aminotransferase family. Pyridoxal 5'-phosphate is required as a cofactor.

This is an uncharacterized protein from Bacillus subtilis (strain 168).